We begin with the raw amino-acid sequence, 236 residues long: Large ribosomal subunit protein eL6 (236 aa).

Belongs to the eukaryotic ribosomal protein eL6 family.

The polypeptide is Large ribosomal subunit protein eL6 (rpl6) (Dictyostelium discoideum (Social amoeba)).